Consider the following 326-residue polypeptide: tRNA-modifying protein YgfZ (326 aa).

Folate is bound by residues tryptophan 27 and tryptophan 189.

This sequence belongs to the tRNA-modifying YgfZ family.

It localises to the cytoplasm. Functionally, folate-binding protein involved in regulating the level of ATP-DnaA and in the modification of some tRNAs. It is probably a key factor in regulatory networks that act via tRNA modification, such as initiation of chromosomal replication. This chain is tRNA-modifying protein YgfZ, found in Salmonella schwarzengrund (strain CVM19633).